Here is a 634-residue protein sequence, read N- to C-terminus: tRNA uridine 5-carboxymethylaminomethyl modification enzyme MnmG (634 aa).

13–18 (GAGHAG) is an FAD binding site. Position 273 to 287 (273 to 287 (GPRYCPSIEDKIIKF)) interacts with NAD(+).

This sequence belongs to the MnmG family. Homodimer. Heterotetramer of two MnmE and two MnmG subunits. It depends on FAD as a cofactor.

Its subcellular location is the cytoplasm. Functionally, NAD-binding protein involved in the addition of a carboxymethylaminomethyl (cmnm) group at the wobble position (U34) of certain tRNAs, forming tRNA-cmnm(5)s(2)U34. This Buchnera aphidicola subsp. Cinara cedri (strain Cc) protein is tRNA uridine 5-carboxymethylaminomethyl modification enzyme MnmG.